The sequence spans 393 residues: Methylthioribose kinase (393 aa).

ATP is bound by residues asparagine 38, lysine 53, and 107–109; that span reads EDL. Residue aspartate 225 coordinates substrate. 242-244 is an ATP binding site; sequence DPE. Residue arginine 332 participates in substrate binding.

Belongs to the methylthioribose kinase family. As to quaternary structure, homodimer.

It carries out the reaction 5-(methylsulfanyl)-D-ribose + ATP = 5-(methylsulfanyl)-alpha-D-ribose 1-phosphate + ADP + H(+). It participates in amino-acid biosynthesis; L-methionine biosynthesis via salvage pathway; S-methyl-5-thio-alpha-D-ribose 1-phosphate from S-methyl-5'-thioadenosine (hydrolase route): step 2/2. Functionally, catalyzes the phosphorylation of methylthioribose into methylthioribose-1-phosphate. The protein is Methylthioribose kinase of Bacillus cereus (strain AH187).